A 25-amino-acid chain; its full sequence is Fibrinolytic enzyme large subunit (25 aa).

Residues 1–25 (VIGGTNASPGEIPWQLSQQRQSGSW) enclose the Peptidase S1 domain. The disordered stretch occupies residues 1–25 (VIGGTNASPGEIPWQLSQQRQSGSW). Residues 15-25 (QLSQQRQSGSW) are compositionally biased toward polar residues.

This sequence belongs to the peptidase S1 family. In terms of assembly, heterodimer of a large and a small subunit held together by hydrophobic interactions.

Its function is as follows. Cleaves the carboxyl side of basic amino acids, small neutral amino acids, and Met residue. It is also a plasminogen activator. The polypeptide is Fibrinolytic enzyme large subunit (Eisenia fetida (Red wiggler worm)).